The chain runs to 254 residues: MRKPLVGINMKNYINTRAQTSEWLEATIPLLKNFSDVDTFIFPSMGTLETTANLLAGTSFGFGPQNMAPEKSGPLTGEFSVESIIDLNANYVEIGHAERKNLFHEKTSEIAKKIKLALDEKITPVVCVGEEVRANDTNELKNALKKQIEALFQTINLAQWENVVLAYEPEWAIGKASSAETNYIESAHQALREIIRELGGDETLVRIIYGGSVSKENAAEIVRQKNVDGLFVGRFGHKPQNFADIVSIVSKTKG.

9–11 serves as a coordination point for substrate; sequence NMK. H96 functions as the Electrophile in the catalytic mechanism. Catalysis depends on E168, which acts as the Proton acceptor. G174 and S212 together coordinate substrate.

It belongs to the triosephosphate isomerase family. In terms of assembly, homodimer.

It localises to the cytoplasm. It catalyses the reaction D-glyceraldehyde 3-phosphate = dihydroxyacetone phosphate. It functions in the pathway carbohydrate biosynthesis; gluconeogenesis. Its pathway is carbohydrate degradation; glycolysis; D-glyceraldehyde 3-phosphate from glycerone phosphate: step 1/1. Involved in the gluconeogenesis. Catalyzes stereospecifically the conversion of dihydroxyacetone phosphate (DHAP) to D-glyceraldehyde-3-phosphate (G3P). This Listeria monocytogenes serotype 4b (strain F2365) protein is Probable triosephosphate isomerase 2.